Here is a 661-residue protein sequence, read N- to C-terminus: UvrABC system protein C (661 aa).

One can recognise a GIY-YIG domain in the interval 26–105 (AEPGCYLMRD…IKNHQPHFNV (80 aa)). In terms of domain architecture, UVR spans 215–250 (DELQNLLQEQMHKYADRTDYESAARVRDQLQGLDQL).

Belongs to the UvrC family. In terms of assembly, interacts with UvrB in an incision complex.

The protein resides in the cytoplasm. In terms of biological role, the UvrABC repair system catalyzes the recognition and processing of DNA lesions. UvrC both incises the 5' and 3' sides of the lesion. The N-terminal half is responsible for the 3' incision and the C-terminal half is responsible for the 5' incision. In Synechococcus sp. (strain CC9902), this protein is UvrABC system protein C.